The sequence spans 402 residues: Nicotinate phosphoribosyltransferase (402 aa).

His226 carries the phosphohistidine; by autocatalysis modification.

Belongs to the NAPRTase family. Transiently phosphorylated on a His residue during the reaction cycle. Phosphorylation strongly increases the affinity for substrates and increases the rate of nicotinate D-ribonucleotide production. Dephosphorylation regenerates the low-affinity form of the enzyme, leading to product release.

It carries out the reaction nicotinate + 5-phospho-alpha-D-ribose 1-diphosphate + ATP + H2O = nicotinate beta-D-ribonucleotide + ADP + phosphate + diphosphate. The protein operates within cofactor biosynthesis; NAD(+) biosynthesis; nicotinate D-ribonucleotide from nicotinate: step 1/1. In terms of biological role, catalyzes the synthesis of beta-nicotinate D-ribonucleotide from nicotinate and 5-phospho-D-ribose 1-phosphate at the expense of ATP. This is Nicotinate phosphoribosyltransferase from Chromobacterium violaceum (strain ATCC 12472 / DSM 30191 / JCM 1249 / CCUG 213 / NBRC 12614 / NCIMB 9131 / NCTC 9757 / MK).